The primary structure comprises 583 residues: Lipoprotein LpqB (583 aa).

Positions 1–29 (MSNKTTEATKTTKVKKVLSVVAGLGLLAG) are cleaved as a signal peptide. A lipid anchor (N-palmitoyl cysteine) is attached at C30. C30 carries the S-diacylglycerol cysteine lipid modification. A disordered region spans residues 38–63 (NPEAISSYAPAPSGQEAPTPTDGQPS).

Belongs to the LpqB lipoprotein family.

It localises to the cell membrane. In Corynebacterium jeikeium (strain K411), this protein is Lipoprotein LpqB.